A 537-amino-acid chain; its full sequence is Phosphoenolpyruvate carboxykinase (ATP) (537 aa).

3 residues coordinate substrate: R61, Y195, and K201. Residues K201, H220, and 236 to 244 each bind ATP; that span reads GLSGTGKTT. Mn(2+) is bound by residues K201 and H220. Residue D257 coordinates Mn(2+). ATP is bound by residues E285, R323, and T448. R323 is a binding site for substrate.

Belongs to the phosphoenolpyruvate carboxykinase (ATP) family. Mn(2+) serves as cofactor.

Its subcellular location is the cytoplasm. The catalysed reaction is oxaloacetate + ATP = phosphoenolpyruvate + ADP + CO2. Its pathway is carbohydrate biosynthesis; gluconeogenesis. In terms of biological role, involved in the gluconeogenesis. Catalyzes the conversion of oxaloacetate (OAA) to phosphoenolpyruvate (PEP) through direct phosphoryl transfer between the nucleoside triphosphate and OAA. This is Phosphoenolpyruvate carboxykinase (ATP) from Rhodopseudomonas palustris (strain BisA53).